We begin with the raw amino-acid sequence, 458 residues long: UDP-N-acetylmuramoylalanine--D-glutamate ligase (458 aa).

ATP is bound at residue 124 to 130 (GSDGKTT).

The protein belongs to the MurCDEF family.

The protein resides in the cytoplasm. It catalyses the reaction UDP-N-acetyl-alpha-D-muramoyl-L-alanine + D-glutamate + ATP = UDP-N-acetyl-alpha-D-muramoyl-L-alanyl-D-glutamate + ADP + phosphate + H(+). It participates in cell wall biogenesis; peptidoglycan biosynthesis. Cell wall formation. Catalyzes the addition of glutamate to the nucleotide precursor UDP-N-acetylmuramoyl-L-alanine (UMA). The protein is UDP-N-acetylmuramoylalanine--D-glutamate ligase of Clostridium botulinum (strain Okra / Type B1).